The primary structure comprises 316 residues: Pantothenate kinase (316 aa).

95–102 (GSVAVGKS) provides a ligand contact to ATP.

Belongs to the prokaryotic pantothenate kinase family.

It is found in the cytoplasm. The catalysed reaction is (R)-pantothenate + ATP = (R)-4'-phosphopantothenate + ADP + H(+). It participates in cofactor biosynthesis; coenzyme A biosynthesis; CoA from (R)-pantothenate: step 1/5. The polypeptide is Pantothenate kinase (Escherichia coli O17:K52:H18 (strain UMN026 / ExPEC)).